The sequence spans 105 residues: Iron-sulfur cluster assembly protein CyaY (105 aa).

The protein belongs to the frataxin family.

In terms of biological role, involved in iron-sulfur (Fe-S) cluster assembly. May act as a regulator of Fe-S biogenesis. The protein is Iron-sulfur cluster assembly protein CyaY of Photobacterium profundum (strain SS9).